The chain runs to 456 residues: Glutamate-gated chloride channel (456 aa).

The signal sequence occupies residues 1 to 22 (MGSGHYFWAILYFASLCSASLA). Residues 23 to 245 (NNAKINFREK…VDLLFKREFS (223 aa)) lie on the Extracellular side of the membrane. Positions 71, 90, and 154 each coordinate L-glutamate. C163 and C177 form a disulfide bridge. An L-glutamate-binding site is contributed by S183. A disulfide bond links C222 and C233. Residues 246-268 (YYLIQIYIPCCMLVIVSWVSFWL) traverse the membrane as a helical segment. The Cytoplasmic portion of the chain corresponds to 269–273 (DQGAV). Residues 274 to 295 (PARVSLGVTTLLTMATQTSGIN) traverse the membrane as a helical segment. Residues 296-302 (ASLPPVS) lie on the Extracellular side of the membrane. The helical transmembrane segment at 303–323 (YTKAIDVWTGVCLTFVFGALL) threads the bilayer. Topologically, residues 324 to 426 (EFALVNYASR…RQCSRSKRID (103 aa)) are cytoplasmic. A helical membrane pass occupies residues 427–450 (VISRITFPLVFALFNLVYWSTYLF). The Extracellular portion of the chain corresponds to 451–456 (REEEDE).

It belongs to the ligand-gated ion channel (TC 1.A.9) family. Glutamate-gated chloride channel (TC 1.A.9.4) subfamily. Pentamer. Homomultimer. As to expression, expressed in the medulla layers (at protein level). Expressed in all major ON pathway medulla neurons (Mi1, Tm3, Mi4, and Mi9) and in OFF pathway neurons (Tm1, Tm2, Tm4, and Tm9).

Its subcellular location is the postsynaptic cell membrane. It is found in the cell membrane. Its activity is regulated as follows. Glutamate binding triggers a rapidly reversible current, while the anti-helmintic drug ivermectin triggers a permanently open channel configuration. Inhibited by picrotoxin. Functionally, glutamate-gated chloride channel subunit. Together with Gamma-aminobutyric acid receptor Rdl, plays an important role in the visual response by regulating the activity of ON/OFF-selective neurons. This is Glutamate-gated chloride channel (GluClalpha) from Drosophila melanogaster (Fruit fly).